A 647-amino-acid chain; its full sequence is Pumilio homolog 3 (647 aa).

Positions 1–10 (MEVKGKKKFT) are enriched in basic residues. Residues 1 to 123 (MEVKGKKKFT…KKKKELKQSR (123 aa)) form a disordered region. Lys-33 carries the N6-acetyllysine modification. Residues 59 to 68 (PGKKGVKQFK) show a composition bias toward basic residues. The span at 102-123 (SGAKKPKWDDFKKKKKELKQSR) shows a compositional bias: basic and acidic residues. The short motif at 105–117 (KKPKWDDFKKKKK) is the Nuclear localization signal element. Residues 142–509 (ESLRRKDCDK…VVLDKSACVL (368 aa)) form the PUM-HD domain. 11 Pumilio repeats span residues 176–211 (HDST…LSKA), 212–247 (KYSR…MLRH), 248–276 (SEAS…ELYG), 288–324 (PTLD…VIKH), 325–360 (SLVH…LAHT), 361–396 (HDGA…VANG), 397–434 (QYSH…IVND), 435–503 (KYGR…VVLD), 504–550 (KSAC…VAEH), 551–595 (PAGH…WASI), and 596–635 (NRGA…KSSS).

Interacts with PARP1 (via catalytic domain). In terms of tissue distribution, in the adult eye, expressed primarily in retinal ganglion cells and, to a lesser extent, in the pigmented cells.

The protein resides in the nucleus. Its subcellular location is the nucleolus. The protein localises to the nucleoplasm. It is found in the chromosome. Functionally, inhibits the poly(ADP-ribosyl)ation activity of PARP1 and the degradation of PARP1 by CASP3 following genotoxic stress. Binds to double-stranded RNA or DNA without sequence specificity. Involved in development of the eye and of primordial germ cells. The polypeptide is Pumilio homolog 3 (Mus musculus (Mouse)).